Here is a 390-residue protein sequence, read N- to C-terminus: uncharacterized protein (390 aa).

This is an uncharacterized protein from Archaeoglobus fulgidus (strain ATCC 49558 / DSM 4304 / JCM 9628 / NBRC 100126 / VC-16).